We begin with the raw amino-acid sequence, 209 residues long: Large ribosomal subunit protein uL3 (209 aa).

This sequence belongs to the universal ribosomal protein uL3 family. As to quaternary structure, part of the 50S ribosomal subunit. Forms a cluster with proteins L14 and L19.

Its function is as follows. One of the primary rRNA binding proteins, it binds directly near the 3'-end of the 23S rRNA, where it nucleates assembly of the 50S subunit. The chain is Large ribosomal subunit protein uL3 from Carboxydothermus hydrogenoformans (strain ATCC BAA-161 / DSM 6008 / Z-2901).